Reading from the N-terminus, the 187-residue chain is NADH-quinone oxidoreductase subunit B (187 aa).

The [4Fe-4S] cluster site is built by Cys-66, Cys-67, Cys-131, and Cys-161.

Belongs to the complex I 20 kDa subunit family. As to quaternary structure, NDH-1 is composed of 14 different subunits. Subunits NuoB, C, D, E, F, and G constitute the peripheral sector of the complex. Requires [4Fe-4S] cluster as cofactor.

The protein localises to the cell inner membrane. The catalysed reaction is a quinone + NADH + 5 H(+)(in) = a quinol + NAD(+) + 4 H(+)(out). NDH-1 shuttles electrons from NADH, via FMN and iron-sulfur (Fe-S) centers, to quinones in the respiratory chain. Couples the redox reaction to proton translocation (for every two electrons transferred, four hydrogen ions are translocated across the cytoplasmic membrane), and thus conserves the redox energy in a proton gradient. This chain is NADH-quinone oxidoreductase subunit B, found in Rhizorhabdus wittichii (strain DSM 6014 / CCUG 31198 / JCM 15750 / NBRC 105917 / EY 4224 / RW1) (Sphingomonas wittichii).